The primary structure comprises 118 residues: Large ribosomal subunit protein bL20 (118 aa).

It belongs to the bacterial ribosomal protein bL20 family.

Functionally, binds directly to 23S ribosomal RNA and is necessary for the in vitro assembly process of the 50S ribosomal subunit. It is not involved in the protein synthesizing functions of that subunit. In Parvibaculum lavamentivorans (strain DS-1 / DSM 13023 / NCIMB 13966), this protein is Large ribosomal subunit protein bL20.